The following is a 579-amino-acid chain: SHC-transforming protein 1 (579 aa).

Residue M1 is modified to N-acetylmethionine. The segment at 1-137 (MDLLPPKPKY…QLGGEEWTRH (137 aa)) is disordered. Residues 16–44 (ESLSSLEEGASGSTPPEELPSPSASSLGP) are compositionally biased toward low complexity. 2 positions are modified to phosphoserine: S36 and S139. K154 is modified (N6-acetyllysine). In terms of domain architecture, PID spans 156-339 (MGPGVSYLVR…AGFDGSAWDE (184 aa)). Residues 337–357 (WDEEEEEPPDHQYYNDFPGKE) form a disordered region. The CH1 stretch occupies residues 340 to 483 (EEEEPPDHQY…SMAEQLQGEP (144 aa)). Phosphotyrosine is present on residues Y349, Y350, and Y423. The tract at residues 432 to 451 (ARQAGGGAGPPNPSLNGSAP) is disordered. The residue at position 449 (S449) is a Phosphoserine. The 92-residue stretch at 484-575 (WFHGKLSRRE…GSELCLQQPV (92 aa)) folds into the SH2 domain.

As to quaternary structure, interacts with CPNE3; this interaction may mediate the binding of CPNE3 with ERBB2. Interacts with the NPXY motif of tyrosine-phosphorylated IGF1R and INSR in vitro via the PID domain. Once activated, binds to GRB2. Interacts with tyrosine-phosphorylated DDR2 and CD3T. Interacts with the N-terminal region of APS. Interacts with GRB7 and KIT. Interacts with PTK2/FAK1. Interacts with phosphorylated LRP1 and IRS4. Interacts with FLT4 (tyrosine-phosphorylated). Interacts with PDGFRB (tyrosine-phosphorylated). Interacts with ERBB4. Interacts with TEK/TIE2 (tyrosine-phosphorylated). Interacts with ALK, GAB2, TRIM31, INPP5D/SHIP1 and INPPL1/SHIP2. Interacts with PTPN6/SHP (tyrosine phosphorylated). Identified in a complex containing FGFR4, NCAM1, CDH2, PLCG1, FRS2, SRC, SHC1, GAP43 and CTTN. Interacts with EPHB1 and GRB2; activates the MAPK/ERK cascade to regulate cell migration. Interacts with the Trk receptors NTRK1, NTRK2 and NTRK3; in a phosphotyrosine-dependent manner. Interacts with CEACAM1; this interaction is CEACAM1-phosphorylation-dependent and mediates interaction with EGFR or INSR resulting in decrease coupling of SHC1 to the MAPK3/ERK1-MAPK1/ERK2 pathway. Interacts (via PID domain) with PEAK1 (when phosphorylated at 'Tyr-1177'). Found in a complex with PPP1CA, PPP1CC, SHC1 and PEAK1. Post-translationally, phosphorylated in response to FLT4 signaling. Tyrosine phosphorylated by ligand-activated PDGFRB. May be tyrosine phosphorylated by activated PTK2/FAK1. Tyrosine phosphorylated by TEK/TIE2. Tyrosine phosphorylated by activated PTK2B/PYK2. Dephosphorylation by PTPN2 may regulate interaction with GRB2. Phosphorylated by activated epidermal growth factor receptor. Phosphorylated in response to KIT signaling. Isoform p47Shc and isoform p52Shc are phosphorylated on tyrosine residues of the Pro-rich domain. Isoform p66Shc is phosphorylated on Ser-36 by PRKCB upon treatment with insulin, hydrogen peroxide or irradiation with ultraviolet light. FLT3 signaling promotes tyrosine phosphorylation of isoform p47Shc and isoform p52Shc. Also tyrosine phosphorylated by ligand-activated ALK. As to expression, widely expressed. Expressed in neural stem cells but absent in mature neurons.

It is found in the cytoplasm. The protein localises to the cell junction. It localises to the focal adhesion. The protein resides in the mitochondrion matrix. Its subcellular location is the mitochondrion. Functionally, signaling adapter that couples activated growth factor receptors to signaling pathways. Participates in signaling downstream of the angiopoietin receptor TEK/TIE2, and plays a role in the regulation of endothelial cell migration and sprouting angiogenesis. Participates in a signaling cascade initiated by activated KIT and KITLG/SCF. Isoform p47Shc and isoform p52Shc, once phosphorylated, couple activated receptor kinases to Ras via the recruitment of the GRB2/SOS complex and are implicated in the cytoplasmic propagation of mitogenic signals. Isoform p47Shc and isoform p52 may thus function as initiators of the Ras signaling cascade in various non-neuronal systems. Isoform p66Shc does not mediate Ras activation, but is involved in signal transduction pathways that regulate the cellular response to oxidative stress and life span. Isoform p66Shc acts as a downstream target of the tumor suppressor p53 and is indispensable for the ability of stress-activated p53 to induce elevation of intracellular oxidants, cytochrome c release and apoptosis. The expression of isoform p66Shc has been correlated with life span. In Mus musculus (Mouse), this protein is SHC-transforming protein 1 (Shc1).